The sequence spans 544 residues: Esterase P (544 aa).

The N-terminal stretch at Met1–Glu19 is a signal peptide. Asn75 is a glycosylation site (N-linked (GlcNAc...) asparagine). A disulfide bridge connects residues Cys83 and Cys102. Asn114 carries an N-linked (GlcNAc...) asparagine glycan. Ser206 acts as the Acyl-ester intermediate in catalysis. Cys258 and Cys270 are joined by a disulfide. 2 N-linked (GlcNAc...) asparagine glycosylation sites follow: Asn262 and Asn456. Residue His466 is the Charge relay system of the active site. A disulfide bridge links Cys514 with Cys535.

It belongs to the type-B carboxylesterase/lipase family. As to quaternary structure, monomer.

The protein localises to the secreted. The enzyme catalyses a carboxylic ester + H2O = an alcohol + a carboxylate + H(+). This Drosophila melanogaster (Fruit fly) protein is Esterase P (Est-P).